The following is a 628-amino-acid chain: Chaperone protein HtpG (628 aa).

The a; substrate-binding stretch occupies residues 1–337 (MSEKKYTFET…SADLPLNVSR (337 aa)). The tract at residues 338 to 554 (EILQHNKVID…DYGMSLHMQK (217 aa)) is b. The segment at 555–628 (MMEEAGQGFM…FVKLVNKYIR (74 aa)) is c.

The protein belongs to the heat shock protein 90 family. In terms of assembly, homodimer.

The protein resides in the cytoplasm. Functionally, molecular chaperone. Has ATPase activity. This is Chaperone protein HtpG from Francisella tularensis subsp. novicida (strain U112).